Reading from the N-terminus, the 491-residue chain is Aspartyl/glutamyl-tRNA(Asn/Gln) amidotransferase subunit B (491 aa).

This sequence belongs to the GatB/GatE family. GatB subfamily. Heterotrimer of A, B and C subunits.

The catalysed reaction is L-glutamyl-tRNA(Gln) + L-glutamine + ATP + H2O = L-glutaminyl-tRNA(Gln) + L-glutamate + ADP + phosphate + H(+). The enzyme catalyses L-aspartyl-tRNA(Asn) + L-glutamine + ATP + H2O = L-asparaginyl-tRNA(Asn) + L-glutamate + ADP + phosphate + 2 H(+). In terms of biological role, allows the formation of correctly charged Asn-tRNA(Asn) or Gln-tRNA(Gln) through the transamidation of misacylated Asp-tRNA(Asn) or Glu-tRNA(Gln) in organisms which lack either or both of asparaginyl-tRNA or glutaminyl-tRNA synthetases. The reaction takes place in the presence of glutamine and ATP through an activated phospho-Asp-tRNA(Asn) or phospho-Glu-tRNA(Gln). This Nostoc sp. (strain PCC 7120 / SAG 25.82 / UTEX 2576) protein is Aspartyl/glutamyl-tRNA(Asn/Gln) amidotransferase subunit B.